The following is a 135-amino-acid chain: MVLESIARVIKVQLPAYLKRLPIPDSIAGFIRLTVSEWLRLLPFLGVLALLGYLAIRPFLPKKKQQKDSLINLKIQKENPKVVNEINIEDLHLAKAAYCRCWRSKTFPVCDGSHNKHNELTGDNVGPLILKKKEV.

The Lumenal portion of the chain corresponds to 1–37; it reads MVLESIARVIKVQLPAYLKRLPIPDSIAGFIRLTVSE. Residues 38–60 form a helical membrane-spanning segment; sequence WLRLLPFLGVLALLGYLAIRPFL. Topologically, residues 61–135 are cytoplasmic; sequence PKKKQQKDSL…GPLILKKKEV (75 aa). Residues Cys99, Cys101, Cys110, and His114 each coordinate [2Fe-2S] cluster.

It belongs to the CISD protein family. CISD2 subfamily. As to quaternary structure, homodimer. It depends on [2Fe-2S] cluster as a cofactor.

It localises to the endoplasmic reticulum membrane. It is found in the mitochondrion outer membrane. Functionally, regulator of autophagy that contributes to antagonize becn1-mediated cellular autophagy at the endoplasmic reticulum. Participates in the interaction of bcl2 with becn1 and is required for bcl2-mediated depression of endoplasmic reticulum Ca(2+) stores during autophagy. The chain is CDGSH iron-sulfur domain-containing protein 2 (cisd2) from Xenopus tropicalis (Western clawed frog).